Consider the following 167-residue polypeptide: Arginine repressor (167 aa).

Belongs to the ArgR family.

The protein resides in the cytoplasm. Its pathway is amino-acid biosynthesis; L-arginine biosynthesis [regulation]. Functionally, regulates arginine biosynthesis genes. The protein is Arginine repressor of Mycobacterium leprae (strain Br4923).